Here is a 45-residue protein sequence, read N- to C-terminus: Cytochrome b559 subunit beta (45 aa).

The helical transmembrane segment at 20 to 36 (WLAVHTLGVPTVFFLGA) threads the bilayer. His24 provides a ligand contact to heme.

The protein belongs to the PsbE/PsbF family. Heterodimer of an alpha subunit and a beta subunit. PSII is composed of 1 copy each of membrane proteins PsbA, PsbB, PsbC, PsbD, PsbE, PsbF, PsbH, PsbI, PsbJ, PsbK, PsbL, PsbM, PsbT, PsbX, PsbY, PsbZ, Psb30/Ycf12, peripheral proteins PsbO, CyanoQ (PsbQ), PsbU, PsbV and a large number of cofactors. It forms dimeric complexes. Heme b serves as cofactor.

It is found in the cellular thylakoid membrane. This b-type cytochrome is tightly associated with the reaction center of photosystem II (PSII). PSII is a light-driven water:plastoquinone oxidoreductase that uses light energy to abstract electrons from H(2)O, generating O(2) and a proton gradient subsequently used for ATP formation. It consists of a core antenna complex that captures photons, and an electron transfer chain that converts photonic excitation into a charge separation. In Nostoc punctiforme (strain ATCC 29133 / PCC 73102), this protein is Cytochrome b559 subunit beta.